We begin with the raw amino-acid sequence, 233 residues long: Maternal B9.15 protein (233 aa).

The segment at 135 to 165 (KATSDYHSGTSSDEEPTNKEPKTIPKVSNPN) is disordered.

It belongs to the BTG family.

In Xenopus laevis (African clawed frog), this protein is Maternal B9.15 protein.